The following is a 323-amino-acid chain: tRNA dimethylallyltransferase (323 aa).

Residue 12-19 coordinates ATP; it reads GPTAAGKT. 14–19 is a binding site for substrate; it reads TAAGKT. Interaction with substrate tRNA stretches follow at residues 37–40 and 161–165; these read DSAL and QRLTR.

This sequence belongs to the IPP transferase family. In terms of assembly, monomer. Requires Mg(2+) as cofactor.

It catalyses the reaction adenosine(37) in tRNA + dimethylallyl diphosphate = N(6)-dimethylallyladenosine(37) in tRNA + diphosphate. Catalyzes the transfer of a dimethylallyl group onto the adenine at position 37 in tRNAs that read codons beginning with uridine, leading to the formation of N6-(dimethylallyl)adenosine (i(6)A). In Pseudomonas fluorescens (strain ATCC BAA-477 / NRRL B-23932 / Pf-5), this protein is tRNA dimethylallyltransferase.